Here is a 447-residue protein sequence, read N- to C-terminus: NAC domain containing protein 50 (447 aa).

The interval 1 to 21 (MGRESLAVVSSPPSATAPSTA) is disordered. The region spanning 27-178 (LAPGFRFHPT…AYVLCRVFHK (152 aa)) is the NAC domain. Residues 126-184 (LGMKKTLVFHSGRAPDGLRTNWVMHEYRLVEYETETNGSLLQDAYVLCRVFHKNNIGPP) mediate DNA binding. 2 disordered regions span residues 246 to 303 (DATP…NKEA) and 371 to 392 (KENQ…EEKV). Basic and acidic residues predominate over residues 281–293 (TLKREHAEEDERP). The stretch at 392 to 447 (VNDLQKEVHQMSVERETFKLEMMSAEAMISILQSRIDALRQENEELKKKNASGQAS) forms a coiled coil.

As to quaternary structure, interacts with JMJ14 and NAC052. As to expression, mostly expressed in floral organs, and, at low levels, in other organs.

It localises to the nucleus. Functionally, transcriptional repressor that binds to the motif 5'-(C/T)A(C/A)G-3' in the promoter of target genes. Also binds to the 5'-CTTGNNNNNCAAG-3' consensus sequence in chromatin. Can bind to the mitochondrial dysfunction motif (MDM) present in the upstream regions of mitochondrial dysfunction stimulon (MDS) genes involved in mitochondrial retrograde regulation (MRR). Together with NAC051/NAC052 and JMJ14, regulates gene expression and flowering time by associating with the histone demethylase JMJ14, probably by the promotion of RNA-mediated gene silencing. This is NAC domain containing protein 50 from Arabidopsis thaliana (Mouse-ear cress).